The primary structure comprises 242 residues: Glutathione S-transferase 3 (242 aa).

The GST N-terminal domain maps to 1–79 (MIVLHHLKNS…HLVRKYGPSF (79 aa)). Residues 85–234 (DVAELEKYEL…ERYSHPPTPP (150 aa)) form the GST C-terminal domain. Phosphoserine is present on S228. Phosphothreonine is present on T232.

It belongs to the GST superfamily. In terms of assembly, interacts with sad1.

It localises to the cytoplasm. The enzyme catalyses RX + glutathione = an S-substituted glutathione + a halide anion + H(+). Functionally, may have a role in the detoxification of various heavy metals. The protein is Glutathione S-transferase 3 (gst3) of Schizosaccharomyces pombe (strain 972 / ATCC 24843) (Fission yeast).